Here is a 379-residue protein sequence, read N- to C-terminus: Oxidoreductase chry3 (379 aa).

Disordered stretches follow at residues 1 to 23 (MTTATKPHQGRFRYLTRGSQPTP) and 126 to 150 (EGDDSAPAEEEADTQASSSDDTSHM). Over residues 126–138 (EGDDSAPAEEEAD) the composition is skewed to acidic residues.

It belongs to the asaB hydroxylase/desaturase family.

It functions in the pathway pigment biosynthesis. Its function is as follows. Oxidoreductase; part of the gene cluster that mediates the biosynthesis of the yellow pigment chrysogine. Pyruvic acid and anthranilic acid are likely substrates for the nonribosomal peptide synthetase chry1/NRPS14, with pyruvic acid adenylated by the first A domain and anthranilic acid by the second. If pyruvic acid and anthranilic acid are merged and released from chry1/NRPS14 by hydrolysis, a subsequent amidation would lead to 2-pyruvoylaminobenzamide. This process is probably catalyzed by the amidotransferase chry2 using glutamine as amino donor. The dehydrogenase chry5 that has a terminal berberine bridge domain for C-N cyclization could catalyze the cyclization of 2-pyruvoylaminobenzamide to yield acetyl-4(3H)-quinazolidinone. A final reduction of acetyl-4(3H)-quinazolidinone catalyzed by the oxidoreductase chry4 would result in chrysogine. The sequence is that of Oxidoreductase chry3 from Gibberella zeae (strain ATCC MYA-4620 / CBS 123657 / FGSC 9075 / NRRL 31084 / PH-1) (Wheat head blight fungus).